The chain runs to 510 residues: MDIRAAEISAILKSQIANFGEEADVSDVGSVLSVGDGIARVYGLDNVQAGEMVEFPSAGVKGMALNLERDNVGIVIFGEDRAIREGDEVRRLGEIVDVPVGKGLLGRVVNPLGEPIDGKGPIQNVAERRRVDVKAPGIIPRKSVHEPVQTGLKAIDTLIPVGRGQRELIIGDRQTGKTAVAVDTILNQKQVNAGGDESQKLYCIYVAIGQKRSTVAQIVKTLEERGALDYTIVVSATASEPAPLQFLAPFAGCAMGEWFRDNGMHAVIIYDDLSKQAVAYRQMSLLLRRPPGREAYPGDVFYLHSRLLERAAKLNEDNGLGSLTALPIIETQANDVSAYIPTNVISITDGQIFLETDLFFQGIRPAVNVGISVSRVGSSAQIKAMKTAAGPIKGELAQYREMAAFAKFGSDLDVATQRQLARGERLTELLKQPQYSPLAVEEQVVSVYAGTRGYLDKIPTAQVGRFESELLSYMHAKHQDILDEIRTKKDLGPVEDRLKSALAAFADSFA.

171-178 (GDRQTGKT) contributes to the ATP binding site.

It belongs to the ATPase alpha/beta chains family. F-type ATPases have 2 components, CF(1) - the catalytic core - and CF(0) - the membrane proton channel. CF(1) has five subunits: alpha(3), beta(3), gamma(1), delta(1), epsilon(1). CF(0) has three main subunits: a(1), b(2) and c(9-12). The alpha and beta chains form an alternating ring which encloses part of the gamma chain. CF(1) is attached to CF(0) by a central stalk formed by the gamma and epsilon chains, while a peripheral stalk is formed by the delta and b chains.

It localises to the cell inner membrane. The enzyme catalyses ATP + H2O + 4 H(+)(in) = ADP + phosphate + 5 H(+)(out). In terms of biological role, produces ATP from ADP in the presence of a proton gradient across the membrane. The alpha chain is a regulatory subunit. The polypeptide is ATP synthase subunit alpha (Phenylobacterium zucineum (strain HLK1)).